The following is a 227-amino-acid chain: MATWSNLSIQDGASPLMEQLSFFHDDHTMVVLLITVIVGYALSYMLFNAYTNRNMLHGHLIETIWTALPAITLIFIALPSLRLLYLLDDSVDAMITIKTIGRQWYWSYEYSDFMDVEFDTYMTPEQDLENDGFRLLDVDNRTILPMNTEVRVLTSASDVLHSWAVPALGVKIDATPGRLNQGTFTMNRPGLFFGQCSEICGANHSFMPIVIESTSVNLFIKWLSKMI.

The Mitochondrial intermembrane segment spans residues 1–26 (MATWSNLSIQDGASPLMEQLSFFHDD). The helical transmembrane segment at 27-48 (HTMVVLLITVIVGYALSYMLFN) threads the bilayer. Residues 49–62 (AYTNRNMLHGHLIE) lie on the Mitochondrial matrix side of the membrane. Residues 63 to 82 (TIWTALPAITLIFIALPSLR) traverse the membrane as a helical segment. The Mitochondrial intermembrane segment spans residues 83–227 (LLYLLDDSVD…LFIKWLSKMI (145 aa)). Positions 161, 196, 198, 200, 204, and 207 each coordinate Cu cation. Position 198 (glutamate 198) interacts with Mg(2+).

Belongs to the cytochrome c oxidase subunit 2 family. As to quaternary structure, component of the cytochrome c oxidase (complex IV, CIV), a multisubunit enzyme composed of a catalytic core of 3 subunits and several supernumerary subunits. The complex exists as a monomer or a dimer and forms supercomplexes (SCs) in the inner mitochondrial membrane with ubiquinol-cytochrome c oxidoreductase (cytochrome b-c1 complex, complex III, CIII). It depends on Cu cation as a cofactor.

The protein localises to the mitochondrion inner membrane. The catalysed reaction is 4 Fe(II)-[cytochrome c] + O2 + 8 H(+)(in) = 4 Fe(III)-[cytochrome c] + 2 H2O + 4 H(+)(out). Functionally, component of the cytochrome c oxidase, the last enzyme in the mitochondrial electron transport chain which drives oxidative phosphorylation. The respiratory chain contains 3 multisubunit complexes succinate dehydrogenase (complex II, CII), ubiquinol-cytochrome c oxidoreductase (cytochrome b-c1 complex, complex III, CIII) and cytochrome c oxidase (complex IV, CIV), that cooperate to transfer electrons derived from NADH and succinate to molecular oxygen, creating an electrochemical gradient over the inner membrane that drives transmembrane transport and the ATP synthase. Cytochrome c oxidase is the component of the respiratory chain that catalyzes the reduction of oxygen to water. Electrons originating from reduced cytochrome c in the intermembrane space (IMS) are transferred via the dinuclear copper A center (CU(A)) of subunit 2 and heme A of subunit 1 to the active site in subunit 1, a binuclear center (BNC) formed by heme A3 and copper B (CU(B)). The BNC reduces molecular oxygen to 2 water molecules using 4 electrons from cytochrome c in the IMS and 4 protons from the mitochondrial matrix. This chain is Cytochrome c oxidase subunit 2 (COII), found in Schistocerca gregaria (Desert locust).